An 85-amino-acid polypeptide reads, in one-letter code: Progonadoliberin-2 (85 aa).

The signal sequence occupies residues 1 to 23; it reads MCVSRLVLLFGLLLCVGAQLSNA. Residue Gln24 is modified to Pyrrolidone carboxylic acid. Glycine amide is present on Gly33.

The protein belongs to the GnRH family.

The protein resides in the secreted. In terms of biological role, stimulates the secretion of gonadotropins. The chain is Progonadoliberin-2 (gnrh2) from Dicentrarchus labrax (European seabass).